A 190-amino-acid chain; its full sequence is Protein GrpE (190 aa).

This sequence belongs to the GrpE family. In terms of assembly, homodimer.

The protein resides in the cytoplasm. Its function is as follows. Participates actively in the response to hyperosmotic and heat shock by preventing the aggregation of stress-denatured proteins, in association with DnaK and GrpE. It is the nucleotide exchange factor for DnaK and may function as a thermosensor. Unfolded proteins bind initially to DnaJ; upon interaction with the DnaJ-bound protein, DnaK hydrolyzes its bound ATP, resulting in the formation of a stable complex. GrpE releases ADP from DnaK; ATP binding to DnaK triggers the release of the substrate protein, thus completing the reaction cycle. Several rounds of ATP-dependent interactions between DnaJ, DnaK and GrpE are required for fully efficient folding. The protein is Protein GrpE of Streptococcus agalactiae serotype III (strain NEM316).